The chain runs to 318 residues: Putative olfactory receptor 2W6 (318 aa).

At 1–31 the chain is on the extracellular side; the sequence is MGFYHVGQAAFELLTSSFILVGFSDRPHLEL. The chain crosses the membrane as a helical span at residues 32-52; that stretch reads IVFVVVLIFYLLTLLGNMTIV. At 53-63 the chain is on the cytoplasmic side; the sequence is LLSALDSRLHT. A helical transmembrane segment spans residues 64–84; it reads PMYFFLANLSFLDMCFTTGSI. The Extracellular portion of the chain corresponds to 85-103; it reads PQMLYNLWGPDKTISYVGC. Cys103 and Cys185 are oxidised to a cystine. A helical membrane pass occupies residues 104-124; it reads AIQLYFVLALGGVECVLLAVM. Residues 125 to 145 are Cytoplasmic-facing; it reads AYDRYAAVCKPLHYTIIMHPR. Residues 146-166 form a helical membrane-spanning segment; sequence LCGQLASVAWLSGFGNSLIMA. Topologically, residues 167-202 are extracellular; sequence PQTLMLPRCGHRRVDHFLCEMPALIGMACVDTMMLE. Residues 203 to 223 traverse the membrane as a helical segment; it reads ALAFALAIFIILAPLILILIS. At 224–245 the chain is on the cytoplasmic side; sequence YGYVGGTVLRIKSAAGRKKAFN. The helical transmembrane segment at 246 to 266 threads the bilayer; that stretch reads TCSSHLIVVSLFYGTIIYMYL. Topologically, residues 267–277 are extracellular; sequence QPANTYSQDQG. Residues 278–298 traverse the membrane as a helical segment; it reads KFLTLFYTIVTPSVNPLIYTL. Residues 299–318 lie on the Cytoplasmic side of the membrane; that stretch reads RNKDVKEAMKKVLGKGSAEI.

This sequence belongs to the G-protein coupled receptor 1 family.

It is found in the cell membrane. Its function is as follows. Odorant receptor. This chain is Putative olfactory receptor 2W6 (OR2W6P), found in Homo sapiens (Human).